Here is a 168-residue protein sequence, read N- to C-terminus: Large ribosomal subunit protein uL11 (168 aa).

This sequence belongs to the universal ribosomal protein uL11 family. As to quaternary structure, part of the ribosomal stalk of the 50S ribosomal subunit. Interacts with L10 and the large rRNA to form the base of the stalk. L10 forms an elongated spine to which L12 dimers bind in a sequential fashion forming a multimeric L10(L12)X complex.

Functionally, forms part of the ribosomal stalk which helps the ribosome interact with GTP-bound translation factors. This chain is Large ribosomal subunit protein uL11, found in Metallosphaera sedula (strain ATCC 51363 / DSM 5348 / JCM 9185 / NBRC 15509 / TH2).